Reading from the N-terminus, the 379-residue chain is NADH-rubredoxin oxidoreductase (379 aa).

Cystine bridges form between Cys-26-Cys-286 and Cys-137-Cys-216. FAD contacts are provided by residues 33 to 35, Arg-42, Ala-79, and Tyr-125; that span reads NSE. Asp-259 contributes to the FAD binding site.

This sequence belongs to the FAD-dependent oxidoreductase family. As to quaternary structure, monomer. The cofactor is FAD.

The enzyme catalyses 2 reduced [rubredoxin] + NAD(+) + H(+) = 2 oxidized [rubredoxin] + NADH. Its function is as follows. Catalyzes the NADH-dependent reduction of rubredoxin (Rd). NADPH is a very poor electron donor compared to NADH. Functions as an intermediate component in the electron transfer chain: NADH-&gt;NROR-&gt;Rd-&gt;FprA1/2. Also functions as an intermediate component in the electron transfer chains from NADH to revRbr and Dfx. Therefore, is a key electron carrier in an efficient multienzyme complex that can scavenge O(2) and reactive oxygen species (ROS), and thus plays an important role in the oxidative stress defense system in C.acetobutylicum, an obligate anaerobic bacterium. The protein is NADH-rubredoxin oxidoreductase (nroR) of Clostridium acetobutylicum (strain ATCC 824 / DSM 792 / JCM 1419 / IAM 19013 / LMG 5710 / NBRC 13948 / NRRL B-527 / VKM B-1787 / 2291 / W).